Here is a 251-residue protein sequence, read N- to C-terminus: Probable transcriptional regulatory protein Cgl1663/cg1872 (251 aa).

The disordered stretch occupies residues 1 to 22; the sequence is MSGHSKWATTKHKKAANDAKRG.

This sequence belongs to the TACO1 family.

It is found in the cytoplasm. This chain is Probable transcriptional regulatory protein Cgl1663/cg1872, found in Corynebacterium glutamicum (strain ATCC 13032 / DSM 20300 / JCM 1318 / BCRC 11384 / CCUG 27702 / LMG 3730 / NBRC 12168 / NCIMB 10025 / NRRL B-2784 / 534).